Reading from the N-terminus, the 185-residue chain is Small ribosomal subunit protein uS7 (185 aa).

It belongs to the universal ribosomal protein uS7 family. Part of the 30S ribosomal subunit.

One of the primary rRNA binding proteins, it binds directly to 16S rRNA where it nucleates assembly of the head domain of the 30S subunit. Is located at the subunit interface close to the decoding center. This chain is Small ribosomal subunit protein uS7, found in Methanothrix thermoacetophila (strain DSM 6194 / JCM 14653 / NBRC 101360 / PT) (Methanosaeta thermophila).